The following is a 95-amino-acid chain: Glutaredoxin 1 (95 aa).

The region spanning 1–95 (MNKSILHTII…DKLLEHQPKN (95 aa)) is the Glutaredoxin domain. A disulfide bond links Cys-17 and Cys-20.

This sequence belongs to the glutaredoxin family. In terms of assembly, monomer.

The protein localises to the cytoplasm. In terms of biological role, has a glutathione-disulfide oxidoreductase activity in the presence of NADPH and glutathione reductase. Reduces low molecular weight disulfides and proteins. This Rickettsia prowazekii (strain Madrid E) protein is Glutaredoxin 1 (grxC1).